We begin with the raw amino-acid sequence, 217 residues long: Adenylate kinase (217 aa).

10–15 is a binding site for ATP; that stretch reads GAGKGT. The NMP stretch occupies residues 30–59; it reads STGDMLRAAVKAGTEMGLAAKKVMDAGGLV. Residues Thr-31, Arg-36, 57–59, 85–88, and Gln-92 each bind AMP; these read GLV and GFPR. The interval 122–159 is LID; that stretch reads GRRSHPASGRTYHVKFNPPKVDGVDDVTGEPLVQRDDD. ATP is bound by residues Arg-123 and 132-133; that span reads TY. AMP is bound by residues Arg-156 and Arg-167. Residue Gly-203 participates in ATP binding.

The protein belongs to the adenylate kinase family. Monomer.

Its subcellular location is the cytoplasm. It carries out the reaction AMP + ATP = 2 ADP. Its pathway is purine metabolism; AMP biosynthesis via salvage pathway; AMP from ADP: step 1/1. Its function is as follows. Catalyzes the reversible transfer of the terminal phosphate group between ATP and AMP. Plays an important role in cellular energy homeostasis and in adenine nucleotide metabolism. The sequence is that of Adenylate kinase from Leptothrix cholodnii (strain ATCC 51168 / LMG 8142 / SP-6) (Leptothrix discophora (strain SP-6)).